We begin with the raw amino-acid sequence, 160 residues long: Cytochrome b6-f complex subunit 4 (160 aa).

Transmembrane regions (helical) follow at residues leucine 36–valine 56, leucine 95–glutamate 115, and threonine 131–isoleucine 151.

It belongs to the cytochrome b family. PetD subfamily. In terms of assembly, the 4 large subunits of the cytochrome b6-f complex are cytochrome b6, subunit IV (17 kDa polypeptide, petD), cytochrome f and the Rieske protein, while the 4 small subunits are petG, petL, petM and petN. The complex functions as a dimer.

The protein localises to the plastid. It localises to the chloroplast thylakoid membrane. Its function is as follows. Component of the cytochrome b6-f complex, which mediates electron transfer between photosystem II (PSII) and photosystem I (PSI), cyclic electron flow around PSI, and state transitions. The sequence is that of Cytochrome b6-f complex subunit 4 from Oryza sativa (Rice).